The chain runs to 260 residues: Tropinone reductase homolog At2g29330 (260 aa).

13 to 37 is an NADP(+) binding site; the sequence is LVTGGASGIGHAIVEELAGFGAKIH. S146 is a binding site for substrate. Y159 functions as the Proton acceptor in the catalytic mechanism.

Belongs to the short-chain dehydrogenases/reductases (SDR) family. SDR65C subfamily.

In terms of biological role, reductase active only on small flexible lipophilic carbonyls. No activity with cyclic monoterpenes, tropinone, nitrogen-containing tropinone analogs, tropine or pseudotropine as substrate. The protein is Tropinone reductase homolog At2g29330 of Arabidopsis thaliana (Mouse-ear cress).